A 256-amino-acid chain; its full sequence is Protein RKD4 (256 aa).

The region spanning 130 to 216 is the RWP-RK domain; sequence EKVTVKKKRN…MEEEVKNLEE (87 aa). A coiled-coil region spans residues 190-224; sequence RKLKSLNSLIKNLKNVGMEEEVKNLEEHRFLIEQE.

It localises to the nucleus. Functionally, putative transcription factor. In Arabidopsis thaliana (Mouse-ear cress), this protein is Protein RKD4 (RKD4).